Reading from the N-terminus, the 65-residue chain is uncharacterized protein (65 aa).

This is an uncharacterized protein from Rickettsia conorii (strain ATCC VR-613 / Malish 7).